The following is a 197-amino-acid chain: GTP cyclohydrolase 1 (197 aa).

Zn(2+) is bound by residues Cys85, His88, and Cys156.

This sequence belongs to the GTP cyclohydrolase I family. In terms of assembly, toroid-shaped homodecamer, composed of two pentamers of five dimers.

It carries out the reaction GTP + H2O = 7,8-dihydroneopterin 3'-triphosphate + formate + H(+). The protein operates within cofactor biosynthesis; 7,8-dihydroneopterin triphosphate biosynthesis; 7,8-dihydroneopterin triphosphate from GTP: step 1/1. The polypeptide is GTP cyclohydrolase 1 (Mesorhizobium japonicum (strain LMG 29417 / CECT 9101 / MAFF 303099) (Mesorhizobium loti (strain MAFF 303099))).